The chain runs to 170 residues: Transcription factor E (170 aa).

The region spanning 1-93 (MKDVYLYIVE…TWYVDDEIIK (93 aa)) is the HTH TFE/IIEalpha-type domain.

Belongs to the TFE family. As to quaternary structure, monomer. Interaction with RNA polymerase subunits RpoF and RpoE is necessary for Tfe stimulatory transcription activity. Able to interact with Tbp and RNA polymerase in the absence of DNA promoter. Interacts both with the preinitiation and elongation complexes.

Functionally, transcription factor that plays a role in the activation of archaeal genes transcribed by RNA polymerase. Facilitates transcription initiation by enhancing TATA-box recognition by TATA-box-binding protein (Tbp), and transcription factor B (Tfb) and RNA polymerase recruitment. Not absolutely required for transcription in vitro, but particularly important in cases where Tbp or Tfb function is not optimal. It dynamically alters the nucleic acid-binding properties of RNA polymerases by stabilizing the initiation complex and destabilizing elongation complexes. Seems to translocate with the RNA polymerase following initiation and acts by binding to the non template strand of the transcription bubble in elongation complexes. This chain is Transcription factor E, found in Pyrobaculum aerophilum (strain ATCC 51768 / DSM 7523 / JCM 9630 / CIP 104966 / NBRC 100827 / IM2).